The following is a 288-amino-acid chain: ATP synthase gamma chain (288 aa).

Belongs to the ATPase gamma chain family. As to quaternary structure, F-type ATPases have 2 components, CF(1) - the catalytic core - and CF(0) - the membrane proton channel. CF(1) has five subunits: alpha(3), beta(3), gamma(1), delta(1), epsilon(1). CF(0) has three main subunits: a, b and c.

It localises to the cell inner membrane. In terms of biological role, produces ATP from ADP in the presence of a proton gradient across the membrane. The gamma chain is believed to be important in regulating ATPase activity and the flow of protons through the CF(0) complex. The protein is ATP synthase gamma chain of Vibrio parahaemolyticus serotype O3:K6 (strain RIMD 2210633).